A 118-amino-acid polypeptide reads, in one-letter code: Holo-[acyl-carrier-protein] synthase (118 aa).

Asp5 and Glu51 together coordinate Mg(2+).

This sequence belongs to the P-Pant transferase superfamily. AcpS family. The cofactor is Mg(2+).

The protein localises to the cytoplasm. It carries out the reaction apo-[ACP] + CoA = holo-[ACP] + adenosine 3',5'-bisphosphate + H(+). In terms of biological role, transfers the 4'-phosphopantetheine moiety from coenzyme A to a Ser of acyl-carrier-protein. The polypeptide is Holo-[acyl-carrier-protein] synthase (Helicobacter pylori (strain P12)).